Here is an 807-residue protein sequence, read N- to C-terminus: Ribosome-releasing factor 2, mitochondrial (807 aa).

A mitochondrion-targeting transit peptide spans 1-18 (MFCRKYVFQTWKQLSRSY). A tr-type G domain is found at 27–315 (AKTRNIGIIA…GITKYLPSPL (289 aa)). GTP is bound by residues 36-43 (AHIDAGKT), 100-104 (DTPGH), and 154-157 (NKMD).

This sequence belongs to the TRAFAC class translation factor GTPase superfamily. Classic translation factor GTPase family. EF-G/EF-2 subfamily.

It localises to the mitochondrion. Functionally, mitochondrial GTPase that mediates the disassembly of ribosomes from messenger RNA at the termination of mitochondrial protein biosynthesis. Not involved in the GTP-dependent ribosomal translocation step during translation elongation. The chain is Ribosome-releasing factor 2, mitochondrial from Candida albicans (strain SC5314 / ATCC MYA-2876) (Yeast).